The sequence spans 450 residues: Phosphoglucosamine mutase (450 aa).

The Phosphoserine intermediate role is filled by Ser102. 4 residues coordinate Mg(2+): Ser102, Asp242, Asp244, and Asp246. Ser102 carries the phosphoserine modification.

Belongs to the phosphohexose mutase family. The cofactor is Mg(2+). Post-translationally, activated by phosphorylation.

It catalyses the reaction alpha-D-glucosamine 1-phosphate = D-glucosamine 6-phosphate. In terms of biological role, catalyzes the conversion of glucosamine-6-phosphate to glucosamine-1-phosphate. In Lachnospira eligens (strain ATCC 27750 / DSM 3376 / VPI C15-48 / C15-B4) (Eubacterium eligens), this protein is Phosphoglucosamine mutase.